A 311-amino-acid polypeptide reads, in one-letter code: Probable cell division protein WhiA (311 aa).

A DNA-binding region (H-T-H motif) is located at residues 274–307 (SLKELGSLLTPPLTKSGVNHRFRKLELIAEKIRN).

This sequence belongs to the WhiA family.

In terms of biological role, involved in cell division and chromosome segregation. This chain is Probable cell division protein WhiA, found in Carboxydothermus hydrogenoformans (strain ATCC BAA-161 / DSM 6008 / Z-2901).